The sequence spans 197 residues: dCTP deaminase (197 aa).

DCTP-binding positions include 110–115, D128, 136–138, Y171, and Q182; these read RSSLAR and VLE. E138 serves as the catalytic Proton donor/acceptor.

It belongs to the dCTP deaminase family. Homotrimer.

It catalyses the reaction dCTP + H2O + H(+) = dUTP + NH4(+). It functions in the pathway pyrimidine metabolism; dUMP biosynthesis; dUMP from dCTP (dUTP route): step 1/2. Catalyzes the deamination of dCTP to dUTP. This is dCTP deaminase from Alteromonas mediterranea (strain DSM 17117 / CIP 110805 / LMG 28347 / Deep ecotype).